We begin with the raw amino-acid sequence, 238 residues long: Beta-glucanase (238 aa).

An N-terminal signal peptide occupies residues 1 to 26 (MMKKKSWFTLMITGVISLFFSVSAFA). Residues 29 to 238 (VFWEPLSYFN…EYDWVKYTSN (210 aa)) enclose the GH16 domain. An intrachain disulfide couples Cys56 to Cys85. Glu129 (nucleophile) is an active-site residue. Glu133 serves as the catalytic Proton donor.

This sequence belongs to the glycosyl hydrolase 16 family.

The enzyme catalyses Hydrolysis of (1-&gt;4)-beta-D-glucosidic linkages in beta-D-glucans containing (1-&gt;3)- and (1-&gt;4)-bonds.. In Paenibacillus polymyxa (Bacillus polymyxa), this protein is Beta-glucanase (gluB).